We begin with the raw amino-acid sequence, 532 residues long: Pentatricopeptide repeat-containing protein At5g66500, mitochondrial (532 aa).

The transit peptide at 1-33 directs the protein to the mitochondrion; it reads MFACLRIGRFIRLGNVTVKSTNLVLRCVFIRNF. PPR repeat units lie at residues 48-82, 83-117, 118-148, 149-183, 184-218, 223-248, 250-280, 281-314, 315-345, 346-380, 383-413, and 419-453; these read DLSS…SPDL, SSHT…GAET, GTIS…VEEK, DLVS…RVEI, SEFT…GRDL, TAMI…LNVH, DEVM…QRPN, VRVL…GFVS, DSKL…IPSK, SVVS…GSGV, NSVT…MKEK, and GTEH…DNQS. The type E motif; degenerate stretch occupies residues 458–532; sequence IWVAVLSACS…VKTAGHSLFI (75 aa).

This sequence belongs to the PPR family. PCMP-E subfamily.

The protein localises to the mitochondrion. The polypeptide is Pentatricopeptide repeat-containing protein At5g66500, mitochondrial (PCMP-E38) (Arabidopsis thaliana (Mouse-ear cress)).